The sequence spans 415 residues: Mechanosensing system component YbdG (415 aa).

Residues 1–24 are Periplasmic-facing; the sequence is MQDLISQVEDLAGIEIDHTTSMVM. Residues 25 to 45 traverse the membrane as a helical segment; sequence IFGIIFLTAVVVHIILHWVVL. The Cytoplasmic segment spans residues 46–67; that stretch reads RTFEKRAIASSRLWLQIITQNK. The chain crosses the membrane as a helical span at residues 68 to 88; it reads LFHRLAFTLQGIIVNIQAVFW. Topologically, residues 89-104 are periplasmic; sequence LQKGTEAADILTTCAQ. Residues 105–125 traverse the membrane as a helical segment; the sequence is LWIMMYALLSVFSLLDVILNL. At 126 to 148 the chain is on the cytoplasmic side; it reads AQKFPAASQLPLKGIFQGIKLIG. A helical membrane pass occupies residues 149–169; that stretch reads AILVGILMISLLIGQSPAILI. Over 170 to 173 the chain is Periplasmic; the sequence is SGLG. Residues 174-194 form a helical membrane-spanning segment; it reads AMAAVLMLVFKDPILGLVAGI. At 195-415 the chain is on the cytoplasmic side; that stretch reads QLSANDMLKL…IRSLAGAFKQ (221 aa).

Belongs to the MscS (TC 1.A.23) family. In terms of assembly, homoheptamer.

It localises to the cell inner membrane. Its function is as follows. Functions as a component of a mechanosensing system that transmits signals triggered by external osmotic changes to intracellular factors. This Shigella flexneri protein is Mechanosensing system component YbdG (ybdG).